A 204-amino-acid chain; its full sequence is Proteasome subunit beta (204 aa).

Positions 1–8 (MDDKILEG) are cleaved as a propeptide — removed in mature form; by autocatalysis. Residue Thr-9 is the Nucleophile of the active site.

It belongs to the peptidase T1B family. In terms of assembly, the 20S proteasome core is composed of 14 alpha and 14 beta subunits that assemble into four stacked heptameric rings, resulting in a barrel-shaped structure. The two inner rings, each composed of seven catalytic beta subunits, are sandwiched by two outer rings, each composed of seven alpha subunits. The catalytic chamber with the active sites is on the inside of the barrel. Has a gated structure, the ends of the cylinder being occluded by the N-termini of the alpha-subunits. Is capped at one or both ends by the proteasome regulatory ATPase, PAN.

Its subcellular location is the cytoplasm. The enzyme catalyses Cleavage of peptide bonds with very broad specificity.. Its activity is regulated as follows. The formation of the proteasomal ATPase PAN-20S proteasome complex, via the docking of the C-termini of PAN into the intersubunit pockets in the alpha-rings, triggers opening of the gate for substrate entry. Interconversion between the open-gate and close-gate conformations leads to a dynamic regulation of the 20S proteasome proteolysis activity. Component of the proteasome core, a large protease complex with broad specificity involved in protein degradation. The polypeptide is Proteasome subunit beta (Methanobrevibacter smithii (strain ATCC 35061 / DSM 861 / OCM 144 / PS)).